Consider the following 427-residue polypeptide: Arginine biosynthesis bifunctional protein ArgJ (427 aa).

Substrate is bound by residues threonine 174, lysine 200, threonine 211, glutamate 291, asparagine 422, and threonine 427. Threonine 211 serves as the catalytic Nucleophile.

Belongs to the ArgJ family. In terms of assembly, heterotetramer of two alpha and two beta chains.

It is found in the cytoplasm. The catalysed reaction is N(2)-acetyl-L-ornithine + L-glutamate = N-acetyl-L-glutamate + L-ornithine. It carries out the reaction L-glutamate + acetyl-CoA = N-acetyl-L-glutamate + CoA + H(+). Its pathway is amino-acid biosynthesis; L-arginine biosynthesis; L-ornithine and N-acetyl-L-glutamate from L-glutamate and N(2)-acetyl-L-ornithine (cyclic): step 1/1. It participates in amino-acid biosynthesis; L-arginine biosynthesis; N(2)-acetyl-L-ornithine from L-glutamate: step 1/4. Catalyzes two activities which are involved in the cyclic version of arginine biosynthesis: the synthesis of N-acetylglutamate from glutamate and acetyl-CoA as the acetyl donor, and of ornithine by transacetylation between N(2)-acetylornithine and glutamate. The protein is Arginine biosynthesis bifunctional protein ArgJ of Prochlorococcus marinus (strain MIT 9313).